Here is a 238-residue protein sequence, read N- to C-terminus: Single-stranded DNA-binding protein WHY2, mitochondrial (238 aa).

The transit peptide at 1-29 (MMKQARSLLSRSLCDQSKSLFEASTLRGF) directs the protein to the mitochondrion. Residues 62-67 (KGKAAL) are required for ssDNA binding.

Belongs to the Whirly family. Homotetramer.

Its subcellular location is the mitochondrion. Its function is as follows. Single-stranded DNA-binding protein that associates with mitochondrial DNA and may play a role in the regulation of the gene expression machinery. Also seems to be required to prevent break-induced DNA rearrangements in the mitochondrial genome. Can bind to melt double-stranded DNA in vivo. The sequence is that of Single-stranded DNA-binding protein WHY2, mitochondrial (WHY2) from Arabidopsis thaliana (Mouse-ear cress).